The sequence spans 180 residues: Pro-glucagon (180 aa).

An N-terminal signal peptide occupies residues 1-20 (MKSIYFVAGLFVMLVQGSWQ). Positions 23–56 (LQDTEEKPRSFSTSQTDLLDDPDQMNEDKRHSQG) are disordered. A Phosphoserine modification is found at Ser54. The propeptide occupies 84 to 89 (NRNEIA). Ser105 and Ser108 each carry phosphoserine. Arg127 bears the Arginine amide mark. The propeptide occupies 131-145 (DFPEEVTIVEELRRR). Ser150 and Ser152 each carry phosphoserine.

This sequence belongs to the glucagon family. Proglucagon is post-translationally processed in a tissue-specific manner in pancreatic A cells and intestinal L cells. In pancreatic A cells, the major bioactive hormone is glucagon cleaved by PCSK2/PC2. In the intestinal L cells PCSK1/PC1 liberates GLP-1, GLP-2, glicentin and oxyntomodulin. GLP-1 is further N-terminally truncated by post-translational processing in the intestinal L cells resulting in GLP-1(7-37) GLP-1-(7-36)amide. The C-terminal amidation is neither important for the metabolism of GLP-1 nor for its effects on the endocrine pancreas. Glucagon is secreted in the A cells of the islets of Langerhans. GLP-1, GLP-2, oxyntomodulin and glicentin are secreted from enteroendocrine cells throughout the gastrointestinal tract. GLP-1 and GLP-2 are also secreted in selected neurons in the brain.

It localises to the secreted. Functionally, plays a key role in glucose metabolism and homeostasis. Regulates blood glucose by increasing gluconeogenesis and decreasing glycolysis. A counterregulatory hormone of insulin, raises plasma glucose levels in response to insulin-induced hypoglycemia. Plays an important role in initiating and maintaining hyperglycemic conditions in diabetes. In terms of biological role, potent stimulator of glucose-dependent insulin release. Also stimulates insulin release in response to IL6. Plays important roles on gastric motility and the suppression of plasma glucagon levels. May be involved in the suppression of satiety and stimulation of glucose disposal in peripheral tissues, independent of the actions of insulin. Has growth-promoting activities on intestinal epithelium. May also regulate the hypothalamic pituitary axis (HPA) via effects on LH, TSH, CRH, oxytocin, and vasopressin secretion. Increases islet mass through stimulation of islet neogenesis and pancreatic beta cell proliferation. Inhibits beta cell apoptosis. Its function is as follows. Stimulates intestinal growth and up-regulates villus height in the small intestine, concomitant with increased crypt cell proliferation and decreased enterocyte apoptosis. The gastrointestinal tract, from the stomach to the colon is the principal target for GLP-2 action. Plays a key role in nutrient homeostasis, enhancing nutrient assimilation through enhanced gastrointestinal function, as well as increasing nutrient disposal. Stimulates intestinal glucose transport and decreases mucosal permeability. Significantly reduces food intake. Inhibits gastric emptying in humans. Suppression of gastric emptying may lead to increased gastric distension, which may contribute to satiety by causing a sensation of fullness. Functionally, may modulate gastric acid secretion and the gastro-pyloro-duodenal activity. May play an important role in intestinal mucosal growth in the early period of life. The protein is Pro-glucagon (GCG) of Octodon degus (Degu).